Reading from the N-terminus, the 276-residue chain is Small ribosomal subunit protein uS2 (276 aa).

The disordered stretch occupies residues 226 to 276; sequence KKAREERQLAAAREAAGEPKSEDAPAEAAATEEAPATEAPAAEAQQENAAE. Over residues 251 to 276 the composition is skewed to low complexity; that stretch reads AEAAATEEAPATEAPAAEAQQENAAE.

This sequence belongs to the universal ribosomal protein uS2 family.

In Corynebacterium efficiens (strain DSM 44549 / YS-314 / AJ 12310 / JCM 11189 / NBRC 100395), this protein is Small ribosomal subunit protein uS2.